The chain runs to 100 residues: NADH-quinone oxidoreductase subunit K (100 aa).

3 helical membrane-spanning segments follow: residues 2-22, 28-48, and 63-83; these read VTLN…LVGV, LLML…GLVA, and FFII…LILW.

This sequence belongs to the complex I subunit 4L family. NDH-1 is composed of 14 different subunits. Subunits NuoA, H, J, K, L, M, N constitute the membrane sector of the complex.

It is found in the cell inner membrane. It carries out the reaction a quinone + NADH + 5 H(+)(in) = a quinol + NAD(+) + 4 H(+)(out). In terms of biological role, NDH-1 shuttles electrons from NADH, via FMN and iron-sulfur (Fe-S) centers, to quinones in the respiratory chain. The immediate electron acceptor for the enzyme in this species is believed to be ubiquinone. Couples the redox reaction to proton translocation (for every two electrons transferred, four hydrogen ions are translocated across the cytoplasmic membrane), and thus conserves the redox energy in a proton gradient. This chain is NADH-quinone oxidoreductase subunit K, found in Wolinella succinogenes (strain ATCC 29543 / DSM 1740 / CCUG 13145 / JCM 31913 / LMG 7466 / NCTC 11488 / FDC 602W) (Vibrio succinogenes).